The sequence spans 140 residues: MSSEYQIGHEGEFTYRGHTLDELQEMELDEVAELLPARQRRTIKRGLSVEQEKLLDEAREAGEEETANNPIRTHLRDMPILPRFVGLTFAVYNGQSFERVEVEPEMIGHYLGEFQLTRTSVEHGQAGIGATRSSKFVPLK.

Belongs to the universal ribosomal protein uS19 family.

Its function is as follows. Protein S19 forms a complex with S13 that binds strongly to the 16S ribosomal RNA. In Natronomonas pharaonis (strain ATCC 35678 / DSM 2160 / CIP 103997 / JCM 8858 / NBRC 14720 / NCIMB 2260 / Gabara) (Halobacterium pharaonis), this protein is Small ribosomal subunit protein uS19.